Consider the following 1439-residue polypeptide: DNA-directed RNA polymerase subunit beta' (1439 aa).

The Zn(2+) site is built by Cys-70, Cys-72, Cys-85, and Cys-88. Mg(2+)-binding residues include Asp-504, Asp-506, and Asp-508. Zn(2+)-binding residues include Cys-862, Cys-936, Cys-943, and Cys-946.

This sequence belongs to the RNA polymerase beta' chain family. In terms of assembly, the RNAP catalytic core consists of 2 alpha, 1 beta, 1 beta' and 1 omega subunit. When a sigma factor is associated with the core the holoenzyme is formed, which can initiate transcription. Requires Mg(2+) as cofactor. It depends on Zn(2+) as a cofactor.

It carries out the reaction RNA(n) + a ribonucleoside 5'-triphosphate = RNA(n+1) + diphosphate. Its function is as follows. DNA-dependent RNA polymerase catalyzes the transcription of DNA into RNA using the four ribonucleoside triphosphates as substrates. In Gluconobacter oxydans (strain 621H) (Gluconobacter suboxydans), this protein is DNA-directed RNA polymerase subunit beta'.